Consider the following 605-residue polypeptide: Zinc metalloproteinase nas-34 (605 aa).

The signal sequence occupies residues 1 to 19 (MVSYWPVLIVLCLLPICHA). A propeptide spanning residues 20–124 (KSYFADFVNG…EFLYAIRGKR (105 aa)) is cleaved from the precursor. The Peptidase M12A domain maps to 124–322 (RSMTSFLSER…VKRINFAYCN (199 aa)). 2 cysteine pairs are disulfide-bonded: Cys-165/Cys-321 and Cys-191/Cys-211. His-219 contacts Zn(2+). Residue Glu-220 is part of the active site. Zn(2+) contacts are provided by His-223 and His-229. In terms of domain architecture, EGF-like spans 317–357 (NFAYCNSTCSNYLDCQNGGYINPNDCNNCKCPPGFGGQLCD). N-linked (GlcNAc...) asparagine glycosylation occurs at Asn-322. 4 disulfide bridges follow: Cys-325–Cys-345, Cys-347–Cys-356, Cys-366–Cys-388, and Cys-415–Cys-436. One can recognise a CUB domain in the interval 366–469 (CGAGDITATS…ARFSLNYRYD (104 aa)). The interval 479 to 526 (TTTSTTTTTAPITVPTVSPTTTTTRQTTTTARTSTTTTTTQAPPTTTT) is disordered. One can recognise a TSP type-1 domain in the interval 525-566 (TTSTSQCASWSACSAQCGGCGTQSRRCGTYVETVYCNTNPCT). Cystine bridges form between Cys-531/Cys-551, Cys-537/Cys-560, and Cys-541/Cys-565.

Requires Zn(2+) as cofactor. In terms of tissue distribution, expressed in hypodermal cells. First expressed in the dorsal and lateral surface area of the middle and posterior region of embryos. At later stages, it localizes to lateral surface regions, probably corresponding to hypodermal seam cells. In L1 larvae, it is expressed in seam cells and in a few cells anterior to the nerve ring.

The protein localises to the secreted. In terms of biological role, metalloprotease. Required for normal hatching and migration of neuroblasts. May act by degrading eggshell proteins at hatching. The chain is Zinc metalloproteinase nas-34 (hch-1) from Caenorhabditis elegans.